Consider the following 89-residue polypeptide: Small ribosomal subunit protein uS14 (89 aa).

This sequence belongs to the universal ribosomal protein uS14 family. In terms of assembly, part of the 30S ribosomal subunit. Contacts proteins S3 and S10.

Functionally, binds 16S rRNA, required for the assembly of 30S particles and may also be responsible for determining the conformation of the 16S rRNA at the A site. The polypeptide is Small ribosomal subunit protein uS14 (Chlorobaculum tepidum (strain ATCC 49652 / DSM 12025 / NBRC 103806 / TLS) (Chlorobium tepidum)).